Here is a 96-residue protein sequence, read N- to C-terminus: Co-chaperonin GroES (96 aa).

This sequence belongs to the GroES chaperonin family. In terms of assembly, heptamer of 7 subunits arranged in a ring. Interacts with the chaperonin GroEL.

The protein resides in the cytoplasm. Its function is as follows. Together with the chaperonin GroEL, plays an essential role in assisting protein folding. The GroEL-GroES system forms a nano-cage that allows encapsulation of the non-native substrate proteins and provides a physical environment optimized to promote and accelerate protein folding. GroES binds to the apical surface of the GroEL ring, thereby capping the opening of the GroEL channel. This chain is Co-chaperonin GroES, found in Polaromonas sp. (strain JS666 / ATCC BAA-500).